We begin with the raw amino-acid sequence, 100 residues long: MSRVCDITGQTKSFGNKVSHSNRKTKRTYLVNLHNVTLFSDVLNRKFRFKISSRTLRTIDYKGGFDLYLLETSSRKLSDKAQKIKKMIKKATAENVKVSL.

This sequence belongs to the bacterial ribosomal protein bL28 family.

The sequence is that of Large ribosomal subunit protein bL28 from Ehrlichia ruminantium (strain Gardel).